The sequence spans 110 residues: Nucleoid-associated protein PsycPRwf_1729 (110 aa).

The protein belongs to the YbaB/EbfC family. Homodimer.

The protein localises to the cytoplasm. It is found in the nucleoid. Binds to DNA and alters its conformation. May be involved in regulation of gene expression, nucleoid organization and DNA protection. In Psychrobacter sp. (strain PRwf-1), this protein is Nucleoid-associated protein PsycPRwf_1729.